A 426-amino-acid chain; its full sequence is Tektin-1 (426 aa).

3 coiled-coil regions span residues 21-84 (KNQY…LEQL), 268-307 (LKET…LDQE), and 339-383 (KEVG…ENTI). A disordered region spans residues 396–426 (SNPLRDGGDQGQWARACAPTPSAEDGTSHTD).

It belongs to the tektin family. As to quaternary structure, microtubule inner protein component of sperm flagellar doublet microtubules. In terms of processing, ubiquitinated, leading to its degradation. Deubiquitinated by USP16, promoting its stability.

The protein resides in the cytoplasm. Its subcellular location is the cytoskeleton. The protein localises to the cilium axoneme. It localises to the flagellum axoneme. In terms of biological role, microtubule inner protein (MIP) part of the dynein-decorated doublet microtubules (DMTs) in cilia and flagellar axoneme. Forms filamentous polymers in the walls of ciliary and flagellar microtubules. The sequence is that of Tektin-1 (TEKT1) from Canis lupus familiaris (Dog).